Consider the following 291-residue polypeptide: Pituitary-specific positive transcription factor 1 (291 aa).

The short motif at 5–13 (PFTSADTFI) is the 9aaTAD element. The 75-residue stretch at 124–198 (MDSPEIRELE…ILSKWLEEAE (75 aa)) folds into the POU-specific domain. Positions 214 to 273 (KRKRRTTISIAAKDALERHFGEQNKPSSQEILRMAEELNLEKEVVRVWFCNRRQREKRVK) form a DNA-binding region, homeobox.

Belongs to the POU transcription factor family. Class-1 subfamily. In terms of assembly, interacts with PITX1. Interacts with LHX3. Interacts with ELK1.

It localises to the nucleus. Functionally, transcription factor involved in the specification of the lactotrope, somatotrope, and thyrotrope phenotypes in the developing anterior pituitary. Activates growth hormone and prolactin genes. Specifically binds to the consensus sequence 5'-TAAAT-3'. This chain is Pituitary-specific positive transcription factor 1 (POU1F1), found in Sus scrofa (Pig).